The following is a 343-amino-acid chain: MTTDTTGRTGKPAAAASPERFRYGFLKGNPQLTKNGELKHLLSIEGLPRSIVNHILDTAEQFVSVTDREVKKVPLLRGKSVFNLFFENSTRTRTTFEIAATRLSADVLNLNINASSTSKGESLLDTINNLSAMHADLFVVRHASSGAPYLIAEHCAPHVHVINAGDGRHAHPTQGLLDMYTIRHYKRDFTKLRVAIVGDILHSRVARSDIHALTTLGVPEVRAIGPRTLLPGGLEQMGVKVFHNLDEGLKGVDVIIMLRLQNERMSGALLPSAQEYFKTWGLTPERLALAAPDAIVMHPGPMNRGVEIDSQVADGPQSVILNQVTFGIAVRMAVMGIVAGNSD.

Carbamoyl phosphate-binding residues include Arg91 and Thr92. Lys119 provides a ligand contact to L-aspartate. Residues Arg141, His171, and Gln174 each coordinate carbamoyl phosphate. 2 residues coordinate L-aspartate: Arg204 and Arg259. Residues Gly300 and Pro301 each coordinate carbamoyl phosphate.

This sequence belongs to the aspartate/ornithine carbamoyltransferase superfamily. ATCase family. In terms of assembly, heterododecamer (2C3:3R2) of six catalytic PyrB chains organized as two trimers (C3), and six regulatory PyrI chains organized as three dimers (R2).

The catalysed reaction is carbamoyl phosphate + L-aspartate = N-carbamoyl-L-aspartate + phosphate + H(+). The protein operates within pyrimidine metabolism; UMP biosynthesis via de novo pathway; (S)-dihydroorotate from bicarbonate: step 2/3. In terms of biological role, catalyzes the condensation of carbamoyl phosphate and aspartate to form carbamoyl aspartate and inorganic phosphate, the committed step in the de novo pyrimidine nucleotide biosynthesis pathway. The polypeptide is Aspartate carbamoyltransferase catalytic subunit (Burkholderia vietnamiensis (strain G4 / LMG 22486) (Burkholderia cepacia (strain R1808))).